A 167-amino-acid chain; its full sequence is Lipoprotein signal peptidase (167 aa).

A run of 4 helical transmembrane segments spans residues 5–25 (ICST…LDLG), 42–62 (LIPY…SFLA), 70–90 (WFFA…MYRA), and 102–122 (ALII…GFVI). Catalysis depends on residues D123 and D141. A helical membrane pass occupies residues 137–157 (FNIADMAICIGAGLVIIDSFL).

This sequence belongs to the peptidase A8 family.

Its subcellular location is the cell inner membrane. It catalyses the reaction Release of signal peptides from bacterial membrane prolipoproteins. Hydrolyzes -Xaa-Yaa-Zaa-|-(S,diacylglyceryl)Cys-, in which Xaa is hydrophobic (preferably Leu), and Yaa (Ala or Ser) and Zaa (Gly or Ala) have small, neutral side chains.. It participates in protein modification; lipoprotein biosynthesis (signal peptide cleavage). This protein specifically catalyzes the removal of signal peptides from prolipoproteins. In Photorhabdus laumondii subsp. laumondii (strain DSM 15139 / CIP 105565 / TT01) (Photorhabdus luminescens subsp. laumondii), this protein is Lipoprotein signal peptidase.